The primary structure comprises 238 residues: MPEDLAKQLASYKAQLQQVEAALSGNGENEDLLKLKKDLQEVIELTKDLLSTQPSETLASSDNFASTQPTHSWKVGDKCMAIWSEDGQCYEAEIEEIDEENGTAAITFAGYGNAEVTPLLNLKPVEEGRKAKEDSGNKPMSKKEMIAQQREYKKKKALKKAQRIKELEQEREDQKVKWQQFNNRAYSKNKKGQVKRSIFASPESVTGKVGVGTCGIADKPMTQYQDTSKYNVRHLMPQ.

One can recognise a Tudor domain in the interval 72 to 132 (SWKVGDKCMA…KPVEEGRKAK (61 aa)). A Nuclear localization signal motif is present at residues 142-160 (KKEMIAQQREYKKKKALKK). Phosphoserine is present on serine 201. Residue lysine 219 is modified to N6-acetyllysine.

This sequence belongs to the SMN family. In terms of assembly, associates with spliceosomes. Associates with U4/U5/U6 tri-snRNP and with U2 snRNP.

It localises to the nucleus speckle. Its subcellular location is the nucleus. It is found in the cajal body. Functionally, involved in spliceosome assembly. The protein is Survival of motor neuron-related-splicing factor 30 (SMNDC1) of Bos taurus (Bovine).